The primary structure comprises 81 residues: Small ribosomal subunit protein bS18 (81 aa).

This sequence belongs to the bacterial ribosomal protein bS18 family. Part of the 30S ribosomal subunit. Forms a tight heterodimer with protein bS6.

Functionally, binds as a heterodimer with protein bS6 to the central domain of the 16S rRNA, where it helps stabilize the platform of the 30S subunit. The chain is Small ribosomal subunit protein bS18 from Chlamydia trachomatis serovar L2 (strain ATCC VR-902B / DSM 19102 / 434/Bu).